A 312-amino-acid polypeptide reads, in one-letter code: DNA-directed RNA polymerase subunit alpha (312 aa).

The interval 1–226 (MIEFEKPIIT…EHLNLFTDLT (226 aa)) is alpha N-terminal domain (alpha-NTD). The tract at residues 243–312 (DEKVLDRTIE…DLGLGLKNDK (70 aa)) is alpha C-terminal domain (alpha-CTD).

It belongs to the RNA polymerase alpha chain family. In terms of assembly, homodimer. The RNAP catalytic core consists of 2 alpha, 1 beta, 1 beta' and 1 omega subunit. When a sigma factor is associated with the core the holoenzyme is formed, which can initiate transcription.

The enzyme catalyses RNA(n) + a ribonucleoside 5'-triphosphate = RNA(n+1) + diphosphate. Its function is as follows. DNA-dependent RNA polymerase catalyzes the transcription of DNA into RNA using the four ribonucleoside triphosphates as substrates. This Streptococcus pyogenes serotype M1 protein is DNA-directed RNA polymerase subunit alpha.